We begin with the raw amino-acid sequence, 451 residues long: Phosphoglucosamine mutase (451 aa).

S102 serves as the catalytic Phosphoserine intermediate. Mg(2+)-binding residues include S102, D243, D245, and D247. A Phosphoserine modification is found at S102.

This sequence belongs to the phosphohexose mutase family. Mg(2+) is required as a cofactor. In terms of processing, activated by phosphorylation.

It catalyses the reaction alpha-D-glucosamine 1-phosphate = D-glucosamine 6-phosphate. In terms of biological role, catalyzes the conversion of glucosamine-6-phosphate to glucosamine-1-phosphate. This chain is Phosphoglucosamine mutase, found in Salinispora arenicola (strain CNS-205).